Consider the following 436-residue polypeptide: Protein arginine methyltransferase NDUFAF7, mitochondrial (436 aa).

Residues 1-41 (MNALVRRCVARAGLPCIWRGKCYSSGNEPAESNQVTPMLRH) constitute a mitochondrion transit peptide. Residues 411-436 (GSQERNACQSKTPSSSVAGFDELVWQ) are disordered. Residues 413-427 (QERNACQSKTPSSSV) are compositionally biased toward polar residues.

It belongs to the NDUFAF7 family. In terms of assembly, interacts with NDUFS2.

The protein resides in the mitochondrion. It carries out the reaction L-arginyl-[protein] + 2 S-adenosyl-L-methionine = N(omega),N(omega)'-dimethyl-L-arginyl-[protein] + 2 S-adenosyl-L-homocysteine + 2 H(+). Arginine methyltransferase involved in the assembly or stability of mitochondrial NADH:ubiquinone oxidoreductase complex (complex I). Acts by mediating symmetric dimethylation of 'Arg-118' of NDUFS2 after it assembles into the complex I, stabilizing the early intermediate complex. The sequence is that of Protein arginine methyltransferase NDUFAF7, mitochondrial from Mus musculus (Mouse).